The following is a 102-amino-acid chain: Co-chaperonin GroES (102 aa).

The protein belongs to the GroES chaperonin family. As to quaternary structure, heptamer of 7 subunits arranged in a ring. Interacts with the chaperonin GroEL.

The protein localises to the cytoplasm. Its function is as follows. Together with the chaperonin GroEL, plays an essential role in assisting protein folding. The GroEL-GroES system forms a nano-cage that allows encapsulation of the non-native substrate proteins and provides a physical environment optimized to promote and accelerate protein folding. GroES binds to the apical surface of the GroEL ring, thereby capping the opening of the GroEL channel. This is Co-chaperonin GroES from Streptomyces avermitilis (strain ATCC 31267 / DSM 46492 / JCM 5070 / NBRC 14893 / NCIMB 12804 / NRRL 8165 / MA-4680).